A 182-amino-acid chain; its full sequence is Large ribosomal subunit protein uL5 (182 aa).

Belongs to the universal ribosomal protein uL5 family. In terms of assembly, part of the 50S ribosomal subunit; part of the 5S rRNA/L5/L18/L25 subcomplex. Contacts the 5S rRNA and the P site tRNA. Forms a bridge to the 30S subunit in the 70S ribosome.

This is one of the proteins that bind and probably mediate the attachment of the 5S RNA into the large ribosomal subunit, where it forms part of the central protuberance. In the 70S ribosome it contacts protein S13 of the 30S subunit (bridge B1b), connecting the 2 subunits; this bridge is implicated in subunit movement. Contacts the P site tRNA; the 5S rRNA and some of its associated proteins might help stabilize positioning of ribosome-bound tRNAs. The sequence is that of Large ribosomal subunit protein uL5 from Acidobacterium capsulatum (strain ATCC 51196 / DSM 11244 / BCRC 80197 / JCM 7670 / NBRC 15755 / NCIMB 13165 / 161).